A 207-amino-acid polypeptide reads, in one-letter code: Thiamine-phosphate synthase (207 aa).

Residues 37–41 and Asn69 each bind 4-amino-2-methyl-5-(diphosphooxymethyl)pyrimidine; that span reads QYRDK. Asp70 and Asp89 together coordinate Mg(2+). Residue Ser108 coordinates 4-amino-2-methyl-5-(diphosphooxymethyl)pyrimidine. 135–137 is a 2-[(2R,5Z)-2-carboxy-4-methylthiazol-5(2H)-ylidene]ethyl phosphate binding site; sequence SRT. Lys138 is a 4-amino-2-methyl-5-(diphosphooxymethyl)pyrimidine binding site. Gly164 lines the 2-[(2R,5Z)-2-carboxy-4-methylthiazol-5(2H)-ylidene]ethyl phosphate pocket.

This sequence belongs to the thiamine-phosphate synthase family. Requires Mg(2+) as cofactor.

The catalysed reaction is 2-[(2R,5Z)-2-carboxy-4-methylthiazol-5(2H)-ylidene]ethyl phosphate + 4-amino-2-methyl-5-(diphosphooxymethyl)pyrimidine + 2 H(+) = thiamine phosphate + CO2 + diphosphate. It catalyses the reaction 2-(2-carboxy-4-methylthiazol-5-yl)ethyl phosphate + 4-amino-2-methyl-5-(diphosphooxymethyl)pyrimidine + 2 H(+) = thiamine phosphate + CO2 + diphosphate. It carries out the reaction 4-methyl-5-(2-phosphooxyethyl)-thiazole + 4-amino-2-methyl-5-(diphosphooxymethyl)pyrimidine + H(+) = thiamine phosphate + diphosphate. The protein operates within cofactor biosynthesis; thiamine diphosphate biosynthesis; thiamine phosphate from 4-amino-2-methyl-5-diphosphomethylpyrimidine and 4-methyl-5-(2-phosphoethyl)-thiazole: step 1/1. In terms of biological role, condenses 4-methyl-5-(beta-hydroxyethyl)thiazole monophosphate (THZ-P) and 2-methyl-4-amino-5-hydroxymethyl pyrimidine pyrophosphate (HMP-PP) to form thiamine monophosphate (TMP). This is Thiamine-phosphate synthase from Chromobacterium violaceum (strain ATCC 12472 / DSM 30191 / JCM 1249 / CCUG 213 / NBRC 12614 / NCIMB 9131 / NCTC 9757 / MK).